A 143-amino-acid polypeptide reads, in one-letter code: Transcriptional regulator MraZ (143 aa).

SpoVT-AbrB domains lie at 5–47 and 76–119; these read TYTP…PRAE and TDEQ…DAAA.

It belongs to the MraZ family. Forms oligomers.

It is found in the cytoplasm. The protein resides in the nucleoid. The sequence is that of Transcriptional regulator MraZ from Mycobacterium sp. (strain JLS).